The following is a 207-amino-acid chain: 2,3-bisphosphoglycerate-dependent phosphoglycerate mutase (207 aa).

Substrate-binding positions include arginine 10–asparagine 17, threonine 23–glycine 24, arginine 62, glutamate 89–tyrosine 92, lysine 100, arginine 116–arginine 117, and glycine 160–asparagine 161. Histidine 11 acts as the Tele-phosphohistidine intermediate in catalysis. The active-site Proton donor/acceptor is the glutamate 89.

Belongs to the phosphoglycerate mutase family. BPG-dependent PGAM subfamily. As to quaternary structure, homodimer.

The enzyme catalyses (2R)-2-phosphoglycerate = (2R)-3-phosphoglycerate. Its pathway is carbohydrate degradation; glycolysis; pyruvate from D-glyceraldehyde 3-phosphate: step 3/5. Functionally, catalyzes the interconversion of 2-phosphoglycerate and 3-phosphoglycerate. The chain is 2,3-bisphosphoglycerate-dependent phosphoglycerate mutase from Nitrobacter winogradskyi (strain ATCC 25391 / DSM 10237 / CIP 104748 / NCIMB 11846 / Nb-255).